The primary structure comprises 133 residues: UPF0102 protein AB57_1130 (133 aa).

The protein belongs to the UPF0102 family.

This chain is UPF0102 protein AB57_1130, found in Acinetobacter baumannii (strain AB0057).